A 155-amino-acid chain; its full sequence is Probable calcium-binding protein CML9 (155 aa).

EF-hand domains follow at residues 8-43 (EQVD…LGQN), 86-121 (ATEK…HGDR), and 122-155 (LTEE…MNNK). Ca(2+) is bound by residues D21, D23, D25, R27, and E32.

Its function is as follows. Potential calcium sensor. The chain is Probable calcium-binding protein CML9 (CML9) from Oryza sativa subsp. japonica (Rice).